Consider the following 145-residue polypeptide: Transcription antitermination protein NusB (145 aa).

It belongs to the NusB family.

Functionally, involved in transcription antitermination. Required for transcription of ribosomal RNA (rRNA) genes. Binds specifically to the boxA antiterminator sequence of the ribosomal RNA (rrn) operons. This is Transcription antitermination protein NusB from Burkholderia ambifaria (strain MC40-6).